The following is a 183-amino-acid chain: Nucleoplasmin-like protein NO29 (183 aa).

Acidic residues predominate over residues 126–166 (SDDEDLSGSEEEMEDEEEEEDDDDDDDDDDDDDDDDDEEEI). Residues 126-183 (SDDEDLSGSEEEMEDEEEEEDDDDDDDDDDDDDDDDDEEEITPIKPAKKPLKTLSRTF) form a disordered region.

Belongs to the nucleoplasmin family.

The protein localises to the nucleus. It localises to the nucleolus. This chain is Nucleoplasmin-like protein NO29, found in Xenopus laevis (African clawed frog).